Consider the following 645-residue polypeptide: Transcription termination factor FttA (645 aa).

Residues 10 to 77 form a KHa region; that stretch reads APSNQNIMAT…IIVRIDESVR (68 aa). The segment at 78-146 is KHb; the sequence is KKEEDARKML…WTLRIRKATT (69 aa). Residues 187–391 form a metallo-beta-lactamase N-terminus region; sequence EISLTALGGF…LLIESTYGAK (205 aa). Positions 250, 252, 254, 255, 337, and 360 each coordinate Zn(2+). Residues 392-586 form a beta-Casp region; sequence EDIQPTRQEV…CRMEKLDGFS (195 aa). Residues 587 to 645 are metallo-beta-lactamase C-terminus; that stretch reads GHSDYNQLTGFVQKLRPKLRRVLVNHGERRKSENLALAVRRMFRIPAHYPQIQESIKLF. A Zn(2+)-binding site is contributed by His-612.

Belongs to the metallo-beta-lactamase superfamily. RNA-metabolizing metallo-beta-lactamase-like family. FttA subfamily. Homodimer. Interacts with RNA polymerase (RNAP), interacts with the Spt4-Spt5 complex. The cofactor is Zn(2+).

Terminates transcription on the whole genome. Termination is linked to FttA-mediated RNA cleavage and does not require NTP hydrolysis. Cleaves endonucleolytically at the RNA exit channel of RNA polymerase (RNAP); the 5'-3' exonuclease activity of this protein degrades the nascent RNA released from RNAP. In terms of biological role, terminates transcription genome-wide in M.maripaludis. Restores wild-type growth to a strain of Methanococcus maripaludis depleted for this gene at 22 degrees Celsius and prevents transcriptional read-through. Transcription termination is most effective in vivo on RNAs with more than one U4-tract in their 3'-ends. Has endonuclease activity after U-rich tracts in transcription termination sequences. This is Transcription termination factor FttA from Cenarchaeum symbiosum (strain A).